The primary structure comprises 470 residues: Glycine--tRNA ligase (470 aa).

R94 and E183 together coordinate substrate. ATP contacts are provided by residues 215–217 (RNE), 225–230 (FRMVEF), 298–299 (EI), and 342–345 (GCDR). Residue 230-234 (FEQME) coordinates substrate. Substrate is bound at residue 338 to 342 (ETSSG).

The protein belongs to the class-II aminoacyl-tRNA synthetase family. In terms of assembly, homodimer.

The protein localises to the cytoplasm. It catalyses the reaction tRNA(Gly) + glycine + ATP = glycyl-tRNA(Gly) + AMP + diphosphate. Catalyzes the attachment of glycine to tRNA(Gly). This is Glycine--tRNA ligase from Chlorobaculum tepidum (strain ATCC 49652 / DSM 12025 / NBRC 103806 / TLS) (Chlorobium tepidum).